The sequence spans 214 residues: Glycerol-3-phosphate acyltransferase (214 aa).

A run of 5 helical transmembrane segments spans residues 8-28 (LILAYLLGSIPTGLWIGQIFF), 70-90 (LLPLFLHINGISPMIFGLIAV), 111-131 (AGVVLGFSPLFFSYLIIIFIV), 144-164 (IVVAGFAIISVLIFPLLGIIL), and 165-185 (PSYDLLFTLIIILLASIILIR).

It belongs to the PlsY family. In terms of assembly, probably interacts with PlsX.

The protein localises to the cell membrane. The catalysed reaction is an acyl phosphate + sn-glycerol 3-phosphate = a 1-acyl-sn-glycero-3-phosphate + phosphate. It functions in the pathway lipid metabolism; phospholipid metabolism. Functionally, catalyzes the transfer of an acyl group from acyl-phosphate (acyl-PO(4)) to glycerol-3-phosphate (G3P) to form lysophosphatidic acid (LPA). This enzyme utilizes acyl-phosphate as fatty acyl donor, but not acyl-CoA or acyl-ACP. In Streptococcus gordonii (strain Challis / ATCC 35105 / BCRC 15272 / CH1 / DL1 / V288), this protein is Glycerol-3-phosphate acyltransferase.